Here is a 247-residue protein sequence, read N- to C-terminus: ATP synthase subunit a, chloroplastic (247 aa).

The next 5 helical transmembrane spans lie at 38–58 (QVLI…AIAV), 95–115 (VPFI…GALL), 134–154 (INTT…AGLT), 199–219 (LVVV…VMFL), and 220–240 (GLFT…AYIG).

Belongs to the ATPase A chain family. F-type ATPases have 2 components, CF(1) - the catalytic core - and CF(0) - the membrane proton channel. CF(1) has five subunits: alpha(3), beta(3), gamma(1), delta(1), epsilon(1). CF(0) has four main subunits: a, b, b' and c.

It localises to the plastid. The protein localises to the chloroplast thylakoid membrane. In terms of biological role, key component of the proton channel; it plays a direct role in the translocation of protons across the membrane. The polypeptide is ATP synthase subunit a, chloroplastic (atpI) (Spinacia oleracea (Spinach)).